Reading from the N-terminus, the 350-residue chain is Adenine deaminase (350 aa).

Residues His24, His26, and His207 each contribute to the Zn(2+) site. The active-site Proton donor is Glu210. Asp288 is a Zn(2+) binding site. Asp289 contributes to the substrate binding site.

It belongs to the metallo-dependent hydrolases superfamily. Adenosine and AMP deaminases family. Adenine deaminase type 2 subfamily. Zn(2+) serves as cofactor.

It catalyses the reaction adenine + H2O + H(+) = hypoxanthine + NH4(+). Catalyzes the hydrolytic deamination of adenine to hypoxanthine. Plays an important role in the purine salvage pathway and in nitrogen catabolism. In Paraburkholderia xenovorans (strain LB400), this protein is Adenine deaminase.